The sequence spans 261 residues: Cytochrome c oxidase subunit 3 (261 aa).

The Mitochondrial matrix portion of the chain corresponds to 1–15 (MAHQAHAYHMVDPSP). Residues 16-34 (WPLTGAVAALLMSSGLAIW) traverse the membrane as a helical segment. Topologically, residues 35 to 40 (FHLHSM) are mitochondrial intermembrane. A helical transmembrane segment spans residues 41 to 66 (TLIVLGMILLILTMIQWWRDIIREGT). The Mitochondrial matrix segment spans residues 67–72 (FQGHHT). A helical transmembrane segment spans residues 73 to 105 (PPVQKGLRYGMILFITSEVFFFLGFFWAFYHSS). Topologically, residues 106 to 128 (LAPTPELGGCWPPTGLTTLDPFE) are mitochondrial intermembrane. A helical transmembrane segment spans residues 129 to 152 (VPLLNTAVLLASGVTVTWAHHSLM). Residues 153–155 (EGE) lie on the Mitochondrial matrix side of the membrane. The chain crosses the membrane as a helical span at residues 156-183 (RKQAIQSLALTILLGLYFTALQAMEYYE). Topologically, residues 184–190 (APFTIAD) are mitochondrial intermembrane. A helical transmembrane segment spans residues 191–223 (GVYGSTFFVATGFHGLHVIIGSTFLAVCLLRQV). Residues 224–232 (LFHFTSDHH) lie on the Mitochondrial matrix side of the membrane. The chain crosses the membrane as a helical span at residues 233 to 256 (FGFEAAAWYWHFVDVVWLFLYVSI). The Mitochondrial intermembrane segment spans residues 257-261 (YWWGS).

Belongs to the cytochrome c oxidase subunit 3 family. As to quaternary structure, component of the cytochrome c oxidase (complex IV, CIV), a multisubunit enzyme composed of 14 subunits. The complex is composed of a catalytic core of 3 subunits MT-CO1, MT-CO2 and MT-CO3, encoded in the mitochondrial DNA, and 11 supernumerary subunits COX4I, COX5A, COX5B, COX6A, COX6B, COX6C, COX7A, COX7B, COX7C, COX8 and NDUFA4, which are encoded in the nuclear genome. The complex exists as a monomer or a dimer and forms supercomplexes (SCs) in the inner mitochondrial membrane with NADH-ubiquinone oxidoreductase (complex I, CI) and ubiquinol-cytochrome c oxidoreductase (cytochrome b-c1 complex, complex III, CIII), resulting in different assemblies (supercomplex SCI(1)III(2)IV(1) and megacomplex MCI(2)III(2)IV(2)).

The protein resides in the mitochondrion inner membrane. It catalyses the reaction 4 Fe(II)-[cytochrome c] + O2 + 8 H(+)(in) = 4 Fe(III)-[cytochrome c] + 2 H2O + 4 H(+)(out). In terms of biological role, component of the cytochrome c oxidase, the last enzyme in the mitochondrial electron transport chain which drives oxidative phosphorylation. The respiratory chain contains 3 multisubunit complexes succinate dehydrogenase (complex II, CII), ubiquinol-cytochrome c oxidoreductase (cytochrome b-c1 complex, complex III, CIII) and cytochrome c oxidase (complex IV, CIV), that cooperate to transfer electrons derived from NADH and succinate to molecular oxygen, creating an electrochemical gradient over the inner membrane that drives transmembrane transport and the ATP synthase. Cytochrome c oxidase is the component of the respiratory chain that catalyzes the reduction of oxygen to water. Electrons originating from reduced cytochrome c in the intermembrane space (IMS) are transferred via the dinuclear copper A center (CU(A)) of subunit 2 and heme A of subunit 1 to the active site in subunit 1, a binuclear center (BNC) formed by heme A3 and copper B (CU(B)). The BNC reduces molecular oxygen to 2 water molecules using 4 electrons from cytochrome c in the IMS and 4 protons from the mitochondrial matrix. The protein is Cytochrome c oxidase subunit 3 (mt-co3) of Danio rerio (Zebrafish).